Here is a 303-residue protein sequence, read N- to C-terminus: Glutathione transport system permease protein GsiD (303 aa).

6 helical membrane-spanning segments follow: residues 40 to 60, 105 to 125, 144 to 164, 165 to 185, 222 to 242, and 266 to 286; these read AMTA…ARWI, LAAG…LGLL, LFAF…GSGI, ANVI…LVRG, IVVF…SLSF, and VIAP…VLAF. Residues 101-290 form the ABC transmembrane type-1 domain; sequence AQISLAAGVF…LTVLAFNLLG (190 aa).

The protein belongs to the binding-protein-dependent transport system permease family. The complex is composed of two ATP-binding proteins (GsiA), two transmembrane proteins (GsiC and GsiD) and a solute-binding protein (GsiB).

The protein localises to the cell inner membrane. Part of the ABC transporter complex GsiABCD involved in glutathione import. Probably responsible for the translocation of the substrate across the membrane. This is Glutathione transport system permease protein GsiD from Shigella flexneri serotype 5b (strain 8401).